The following is a 120-amino-acid chain: Reprimo-like protein (120 aa).

The helical transmembrane segment at Val-67–Leu-87 threads the bilayer. The residue at position 109 (Ser-109) is a Phosphoserine.

Belongs to the reprimo family.

It localises to the membrane. This chain is Reprimo-like protein (RPRML), found in Homo sapiens (Human).